A 122-amino-acid chain; its full sequence is Small ribosomal subunit protein uS13 (122 aa).

The segment at 99–122 (RGQRTHTNARTRKGPAKAIAGKKK) is disordered.

It belongs to the universal ribosomal protein uS13 family. As to quaternary structure, part of the 30S ribosomal subunit. Forms a loose heterodimer with protein S19. Forms two bridges to the 50S subunit in the 70S ribosome.

Functionally, located at the top of the head of the 30S subunit, it contacts several helices of the 16S rRNA. In the 70S ribosome it contacts the 23S rRNA (bridge B1a) and protein L5 of the 50S subunit (bridge B1b), connecting the 2 subunits; these bridges are implicated in subunit movement. Contacts the tRNAs in the A and P-sites. The protein is Small ribosomal subunit protein uS13 of Cereibacter sphaeroides (strain ATCC 17029 / ATH 2.4.9) (Rhodobacter sphaeroides).